We begin with the raw amino-acid sequence, 219 residues long: Deoxyribose-phosphate aldolase (219 aa).

Asp-89 serves as the catalytic Proton donor/acceptor. Residue Lys-151 is the Schiff-base intermediate with acetaldehyde of the active site. Lys-180 serves as the catalytic Proton donor/acceptor.

The protein belongs to the DeoC/FbaB aldolase family. DeoC type 1 subfamily.

It is found in the cytoplasm. It catalyses the reaction 2-deoxy-D-ribose 5-phosphate = D-glyceraldehyde 3-phosphate + acetaldehyde. It functions in the pathway carbohydrate degradation; 2-deoxy-D-ribose 1-phosphate degradation; D-glyceraldehyde 3-phosphate and acetaldehyde from 2-deoxy-alpha-D-ribose 1-phosphate: step 2/2. Catalyzes a reversible aldol reaction between acetaldehyde and D-glyceraldehyde 3-phosphate to generate 2-deoxy-D-ribose 5-phosphate. The sequence is that of Deoxyribose-phosphate aldolase from Coprothermobacter proteolyticus (strain ATCC 35245 / DSM 5265 / OCM 4 / BT).